Reading from the N-terminus, the 285-residue chain is Bifunctional protein FolD (285 aa).

Residues 164–166, Ser193, and Ile234 each bind NADP(+); that span reads GRS.

It belongs to the tetrahydrofolate dehydrogenase/cyclohydrolase family. Homodimer.

It catalyses the reaction (6R)-5,10-methylene-5,6,7,8-tetrahydrofolate + NADP(+) = (6R)-5,10-methenyltetrahydrofolate + NADPH. The catalysed reaction is (6R)-5,10-methenyltetrahydrofolate + H2O = (6R)-10-formyltetrahydrofolate + H(+). Its pathway is one-carbon metabolism; tetrahydrofolate interconversion. Catalyzes the oxidation of 5,10-methylenetetrahydrofolate to 5,10-methenyltetrahydrofolate and then the hydrolysis of 5,10-methenyltetrahydrofolate to 10-formyltetrahydrofolate. This is Bifunctional protein FolD from Desulfovibrio desulfuricans (strain ATCC 27774 / DSM 6949 / MB).